A 185-amino-acid chain; its full sequence is Ribosome-recycling factor (185 aa).

The protein belongs to the RRF family.

Its subcellular location is the cytoplasm. In terms of biological role, responsible for the release of ribosomes from messenger RNA at the termination of protein biosynthesis. May increase the efficiency of translation by recycling ribosomes from one round of translation to another. This Actinobacillus pleuropneumoniae serotype 5b (strain L20) protein is Ribosome-recycling factor.